A 92-amino-acid polypeptide reads, in one-letter code: Large ribosomal subunit protein eL43z (92 aa).

The C4-type zinc-finger motif lies at 39–60; that stretch reads CEFCGKFAVKRKAVGIWGCKDC.

It belongs to the eukaryotic ribosomal protein eL43 family.

This is Large ribosomal subunit protein eL43z from Oryza sativa subsp. japonica (Rice).